Reading from the N-terminus, the 103-residue chain is Large ribosomal subunit protein bL21 (103 aa).

The protein belongs to the bacterial ribosomal protein bL21 family. Part of the 50S ribosomal subunit. Contacts protein L20.

Its function is as follows. This protein binds to 23S rRNA in the presence of protein L20. The sequence is that of Large ribosomal subunit protein bL21 from Shewanella woodyi (strain ATCC 51908 / MS32).